Consider the following 339-residue polypeptide: Ketol-acid reductoisomerase (NADP(+)) (339 aa).

The KARI N-terminal Rossmann domain occupies 1–182; it reads MRVYYDRDAD…GGGRSGIIET (182 aa). NADP(+) contacts are provided by residues 24 to 27, arginine 48, serine 51, serine 53, and 83 to 86; these read YGSQ and DELQ. Histidine 108 is a catalytic residue. Glycine 134 lines the NADP(+) pocket. A KARI C-terminal knotted domain is found at 183-328; that stretch reads TFREECETDL…GRLRAMMPWI (146 aa). Aspartate 191, glutamate 195, glutamate 227, and glutamate 231 together coordinate Mg(2+). Serine 252 is a binding site for substrate.

This sequence belongs to the ketol-acid reductoisomerase family. Mg(2+) serves as cofactor.

It carries out the reaction (2R)-2,3-dihydroxy-3-methylbutanoate + NADP(+) = (2S)-2-acetolactate + NADPH + H(+). It catalyses the reaction (2R,3R)-2,3-dihydroxy-3-methylpentanoate + NADP(+) = (S)-2-ethyl-2-hydroxy-3-oxobutanoate + NADPH + H(+). Its pathway is amino-acid biosynthesis; L-isoleucine biosynthesis; L-isoleucine from 2-oxobutanoate: step 2/4. It participates in amino-acid biosynthesis; L-valine biosynthesis; L-valine from pyruvate: step 2/4. Involved in the biosynthesis of branched-chain amino acids (BCAA). Catalyzes an alkyl-migration followed by a ketol-acid reduction of (S)-2-acetolactate (S2AL) to yield (R)-2,3-dihydroxy-isovalerate. In the isomerase reaction, S2AL is rearranged via a Mg-dependent methyl migration to produce 3-hydroxy-3-methyl-2-ketobutyrate (HMKB). In the reductase reaction, this 2-ketoacid undergoes a metal-dependent reduction by NADPH to yield (R)-2,3-dihydroxy-isovalerate. This Rhodospirillum rubrum (strain ATCC 11170 / ATH 1.1.1 / DSM 467 / LMG 4362 / NCIMB 8255 / S1) protein is Ketol-acid reductoisomerase (NADP(+)).